The primary structure comprises 154 residues: D-ribose pyranase 2 (154 aa).

Catalysis depends on His-20, which acts as the Proton donor. Residues Asp-28, His-98, and 121–123 (WGN) each bind substrate.

Belongs to the RbsD / FucU family. RbsD subfamily. As to quaternary structure, homodecamer.

It is found in the cytoplasm. It catalyses the reaction beta-D-ribopyranose = beta-D-ribofuranose. It participates in carbohydrate metabolism; D-ribose degradation; D-ribose 5-phosphate from beta-D-ribopyranose: step 1/2. Functionally, catalyzes the interconversion of beta-pyran and beta-furan forms of D-ribose. This Rubrobacter xylanophilus (strain DSM 9941 / JCM 11954 / NBRC 16129 / PRD-1) protein is D-ribose pyranase 2.